The primary structure comprises 102 residues: MNQINIEIAYAFPERYYLKSFQVDEGITVQTAITQSGILSQFPEIDLSTNKIGIFSRPIKLTDVLKEGDRIEIYRPLLADPKEIRRKRAAEQAAAKNKEKGA.

Belongs to the UPF0125 (RnfH) family.

This Haemophilus influenzae (strain PittEE) protein is Protein RnfH.